Reading from the N-terminus, the 556-residue chain is Formate--tetrahydrofolate ligase (556 aa).

65–72 (TPAGEGKT) is an ATP binding site.

It belongs to the formate--tetrahydrofolate ligase family.

The catalysed reaction is (6S)-5,6,7,8-tetrahydrofolate + formate + ATP = (6R)-10-formyltetrahydrofolate + ADP + phosphate. It functions in the pathway one-carbon metabolism; tetrahydrofolate interconversion. In Clostridium acidurici (Gottschalkia acidurici), this protein is Formate--tetrahydrofolate ligase.